We begin with the raw amino-acid sequence, 156 residues long: Toxin Res (156 aa).

Belongs to the MbcT/ParT/Res family. As to quaternary structure, homodimer. Forms a complex with cognate antitoxin Xre.

In terms of biological role, toxic component of a type II toxin-antitoxin (TA) system. Expression in E.coli inhibits cell growth; bacteriostasis is neutralized by expression of cognate antitoxin Xre. Expression in E.coli leads to almost complete depletion of intracellular NAD(+): NAD(+) levels are partially restored when coexpressed with antitoxin Xre. In Photorhabdus laumondii subsp. laumondii (strain DSM 15139 / CIP 105565 / TT01) (Photorhabdus luminescens subsp. laumondii), this protein is Toxin Res.